Here is a 116-residue protein sequence, read N- to C-terminus: MGKLFLIGAGGFIGACLRYTVSSQVPRIKNIPAGTLTVNLLGTIVLAFLTFSSEPQSMVYLVNIGILGSFTTFSTFAYETFKLLEEGQNFSFFLNIFLNVALCLVGVSIAYLALSL.

The next 4 helical transmembrane spans lie at 1-21, 31-51, 58-78, and 92-112; these read MGKLFLIGAGGFIGACLRYTV, IPAGTLTVNLLGTIVLAFLTF, MVYLVNIGILGSFTTFSTFAY, and FFLNIFLNVALCLVGVSIAYL. Na(+) contacts are provided by Gly68 and Thr71.

It belongs to the fluoride channel Fluc/FEX (TC 1.A.43) family.

It is found in the cell membrane. The enzyme catalyses fluoride(in) = fluoride(out). Its activity is regulated as follows. Na(+) is not transported, but it plays an essential structural role and its presence is essential for fluoride channel function. Its function is as follows. Fluoride-specific ion channel. Important for reducing fluoride concentration in the cell, thus reducing its toxicity. The sequence is that of Fluoride-specific ion channel FluC 1 from Methanosarcina barkeri (strain Fusaro / DSM 804).